We begin with the raw amino-acid sequence, 111 residues long: Universal stress protein B (111 aa).

A run of 2 helical transmembrane segments spans residues 1-21 and 90-110; these read MISTFALFWALCIVCIINMAR and FLLTTALCGLIVISLIAMMMW.

Belongs to the universal stress protein B family.

The protein localises to the cell inner membrane. This is Universal stress protein B from Pectobacterium atrosepticum (strain SCRI 1043 / ATCC BAA-672) (Erwinia carotovora subsp. atroseptica).